The sequence spans 643 residues: Inorganic pyrophosphatase TTM1 (643 aa).

The transit peptide at 1–15 (MALDSSVALSPRRRH) directs the protein to the mitochondrion. Positions 248–410 (NPTYILKSSK…PHTYIEQIQL (163 aa)) constitute a CYTH domain. Residues 618–638 (LESSTVPILLGLAIGCVGIFA) traverse the membrane as a helical segment.

Mg(2+) serves as cofactor. Ubiquitously expressed in all tissues, with strong expression detected in senescent leaves.

Its subcellular location is the mitochondrion outer membrane. It catalyses the reaction diphosphate + H2O = 2 phosphate + H(+). Functionally, exhibits pyrophosphatase activity with stronger affinity for pyrophosphate (PPi), moderate affinity for ATP and ADP, and weak affinity for tripolyphosphate (PPPi). No activity observed toward uridine substrate. Positively regulates natural and dark-induced leaf senescence. This chain is Inorganic pyrophosphatase TTM1, found in Arabidopsis thaliana (Mouse-ear cress).